A 321-amino-acid chain; its full sequence is Phospho-N-acetylmuramoyl-pentapeptide-transferase (321 aa).

The next 10 helical transmembrane spans lie at 1–21 (MIFV…PVLI), 50–70 (MGGL…IIFV), 76–96 (IILL…DDYI), 112–132 (FLAQ…FHLV), 140–160 (IPFT…IVFW), 176–196 (GLAT…SFVL), 200–220 (AIGI…PYNI), 225–245 (VFMG…ISIM), 250–270 (LSLI…MLQV), and 300–320 (VVTV…WIGV).

Belongs to the glycosyltransferase 4 family. MraY subfamily. The cofactor is Mg(2+).

The protein resides in the cell membrane. The enzyme catalyses UDP-N-acetyl-alpha-D-muramoyl-L-alanyl-gamma-D-glutamyl-L-lysyl-D-alanyl-D-alanine + di-trans,octa-cis-undecaprenyl phosphate = Mur2Ac(oyl-L-Ala-gamma-D-Glu-L-Lys-D-Ala-D-Ala)-di-trans,octa-cis-undecaprenyl diphosphate + UMP. The protein operates within cell wall biogenesis; peptidoglycan biosynthesis. Its function is as follows. Catalyzes the initial step of the lipid cycle reactions in the biosynthesis of the cell wall peptidoglycan: transfers peptidoglycan precursor phospho-MurNAc-pentapeptide from UDP-MurNAc-pentapeptide onto the lipid carrier undecaprenyl phosphate, yielding undecaprenyl-pyrophosphoryl-MurNAc-pentapeptide, known as lipid I. The polypeptide is Phospho-N-acetylmuramoyl-pentapeptide-transferase (Staphylococcus aureus (strain MSSA476)).